The chain runs to 806 residues: WEB family protein At3g02930, chloroplastic (806 aa).

Residues 1-78 (MASKIKNGLS…PTPPEKTQIR (78 aa)) constitute a chloroplast transit peptide. 2 disordered regions span residues 1–94 (MASK…QIKE) and 380–403 (KSEQ…EKLK). The span at 9-22 (LSDTTLRKSSSTSL) shows a compositional bias: low complexity. The segment covering 34–59 (PDSNSPSPTQQQSRLSFERPSSNSKP) has biased composition (polar residues). Coiled-coil stretches lie at residues 88 to 530 (QSVQ…FESA), 585 to 662 (DCLK…IEEN), and 698 to 757 (ETLD…EDLN). Over residues 391-403 (ESSKSEKEAEKLK) the composition is skewed to basic and acidic residues. Disordered regions lie at residues 684–725 (ENGY…EDET) and 746–777 (KESA…EDEL). 2 stretches are compositionally biased toward basic and acidic residues: residues 685–699 (NGYR…KVET) and 706–725 (KLEE…EDET). Polar residues predominate over residues 759–769 (VDQSQKTSPVN).

It belongs to the WEB family.

Its subcellular location is the plastid. It is found in the chloroplast. This Arabidopsis thaliana (Mouse-ear cress) protein is WEB family protein At3g02930, chloroplastic.